The sequence spans 367 residues: Viral cathepsin (367 aa).

A signal peptide spans 1–25 (MRKYHSNIMHKIITFVSLLWTFVVC). Residues 26 to 156 (DEISLHTSSS…IVKGAPDIRL (131 aa)) constitute a propeptide, activation peptide. N-linked (GlcNAc...) asparagine; by host glycosylation is found at Asn103 and Asn135. Disulfide bonds link Cys177–Cys218, Cys211–Cys251, and Cys306–Cys354. Residue Cys180 is part of the active site. Residues His313 and Asn333 contribute to the active site.

This sequence belongs to the peptidase C1 family. In terms of processing, synthesized as an inactive proenzyme and activated by proteolytic removal of the inhibitory propeptide.

It carries out the reaction Endopeptidase of broad specificity, hydrolyzing substrates of both cathepsin L and cathepsin B.. Cysteine protease that plays an essential role in host liquefaction to facilitate horizontal transmission of the virus. May participate in the degradation of foreign protein expressed by the baculovirus system. The sequence is that of Viral cathepsin (VCATH) from Lepidoptera (butterflies and moths).